A 319-amino-acid chain; its full sequence is 4-diphosphocytidyl-2-C-methyl-D-erythritol kinase (319 aa).

K18 is an active-site residue. 103–113 contributes to the ATP binding site; sequence PIGAGLAGGST. D145 is an active-site residue.

Belongs to the GHMP kinase family. IspE subfamily.

The enzyme catalyses 4-CDP-2-C-methyl-D-erythritol + ATP = 4-CDP-2-C-methyl-D-erythritol 2-phosphate + ADP + H(+). It functions in the pathway isoprenoid biosynthesis; isopentenyl diphosphate biosynthesis via DXP pathway; isopentenyl diphosphate from 1-deoxy-D-xylulose 5-phosphate: step 3/6. Functionally, catalyzes the phosphorylation of the position 2 hydroxy group of 4-diphosphocytidyl-2C-methyl-D-erythritol. The sequence is that of 4-diphosphocytidyl-2-C-methyl-D-erythritol kinase from Prochlorococcus marinus (strain NATL2A).